The following is a 313-amino-acid chain: Proline iminopeptidase (313 aa).

In terms of domain architecture, AB hydrolase-1 spans 35–298 (KPVVMLHGGP…SPASGHSAFE (264 aa)). Ser110 serves as the catalytic Nucleophile. Asp266 is an active-site residue. His294 acts as the Proton donor in catalysis.

This sequence belongs to the peptidase S33 family. In terms of assembly, homooligomer.

The protein resides in the cytoplasm. The catalysed reaction is Release of N-terminal proline from a peptide.. Functionally, may be involved in proline metabolism and sensitivity to ascamycin. Has ascamycin dealanylating activity. The sequence is that of Proline iminopeptidase (pip) from Xanthomonas citri (Xanthomonas campestris pv. citri).